The following is a 315-amino-acid chain: Glycine--tRNA ligase alpha subunit (315 aa).

Belongs to the class-II aminoacyl-tRNA synthetase family. Tetramer of two alpha and two beta subunits.

It is found in the cytoplasm. The catalysed reaction is tRNA(Gly) + glycine + ATP = glycyl-tRNA(Gly) + AMP + diphosphate. The polypeptide is Glycine--tRNA ligase alpha subunit (Sorangium cellulosum (strain So ce56) (Polyangium cellulosum (strain So ce56))).